A 264-amino-acid chain; its full sequence is Thymidylate synthase (264 aa).

Arg-21 serves as a coordination point for dUMP. His-51 serves as a coordination point for (6R)-5,10-methylene-5,6,7,8-tetrahydrofolate. 126-127 (RR) provides a ligand contact to dUMP. Residue Cys-146 is the Nucleophile of the active site. Residues 166-169 (RSCD), Asn-177, and 207-209 (HLY) each bind dUMP. Asp-169 serves as a coordination point for (6R)-5,10-methylene-5,6,7,8-tetrahydrofolate. Ala-263 provides a ligand contact to (6R)-5,10-methylene-5,6,7,8-tetrahydrofolate.

This sequence belongs to the thymidylate synthase family. Bacterial-type ThyA subfamily. Homodimer.

It is found in the cytoplasm. The catalysed reaction is dUMP + (6R)-5,10-methylene-5,6,7,8-tetrahydrofolate = 7,8-dihydrofolate + dTMP. Its pathway is pyrimidine metabolism; dTTP biosynthesis. Catalyzes the reductive methylation of 2'-deoxyuridine-5'-monophosphate (dUMP) to 2'-deoxythymidine-5'-monophosphate (dTMP) while utilizing 5,10-methylenetetrahydrofolate (mTHF) as the methyl donor and reductant in the reaction, yielding dihydrofolate (DHF) as a by-product. This enzymatic reaction provides an intracellular de novo source of dTMP, an essential precursor for DNA biosynthesis. This is Thymidylate synthase from Aeromonas salmonicida (strain A449).